Reading from the N-terminus, the 305-residue chain is Small ribosomal subunit protein bS1B (305 aa).

S1 motif domains are found at residues 29–98 (GQTV…LSRR), 116–180 (GKTL…LTQR), and 194–262 (GNIY…LSTR).

The protein belongs to the bacterial ribosomal protein bS1 family.

Functionally, binds mRNA. The chain is Small ribosomal subunit protein bS1B (rps1b) from Synechocystis sp. (strain ATCC 27184 / PCC 6803 / Kazusa).